Reading from the N-terminus, the 152-residue chain is UPF0266 membrane protein YobD (152 aa).

The next 3 membrane-spanning stretches (helical) occupy residues 6–26, 45–65, and 67–87; these read LVLI…QFIM, IDSV…VTNH, and ALIT…IFWI.

It belongs to the UPF0266 family.

It is found in the cell inner membrane. The chain is UPF0266 membrane protein YobD from Escherichia coli O157:H7 (strain EC4115 / EHEC).